The following is a 396-amino-acid chain: Enoyl-[acyl-carrier-protein] reductase [NADH] (396 aa).

Residues Gly-48–Tyr-53, Phe-74–Glu-75, Asp-111–Ala-112, and Leu-139–Ala-140 contribute to the NAD(+) site. Tyr-225 is a binding site for substrate. Catalysis depends on Tyr-235, which acts as the Proton donor. NAD(+) contacts are provided by residues Lys-244 and Val-273–Thr-275.

The protein belongs to the TER reductase family. In terms of assembly, monomer.

The catalysed reaction is a 2,3-saturated acyl-[ACP] + NAD(+) = a (2E)-enoyl-[ACP] + NADH + H(+). It participates in lipid metabolism; fatty acid biosynthesis. Functionally, involved in the final reduction of the elongation cycle of fatty acid synthesis (FAS II). Catalyzes the reduction of a carbon-carbon double bond in an enoyl moiety that is covalently linked to an acyl carrier protein (ACP). This is Enoyl-[acyl-carrier-protein] reductase [NADH] from Teredinibacter turnerae (strain ATCC 39867 / T7901).